The chain runs to 75 residues: Small ribosomal subunit protein bS18 (75 aa).

It belongs to the bacterial ribosomal protein bS18 family. As to quaternary structure, part of the 30S ribosomal subunit. Forms a tight heterodimer with protein bS6.

Its function is as follows. Binds as a heterodimer with protein bS6 to the central domain of the 16S rRNA, where it helps stabilize the platform of the 30S subunit. The chain is Small ribosomal subunit protein bS18 from Photobacterium profundum (strain SS9).